The primary structure comprises 263 residues: Small ribosomal subunit protein eS1 (263 aa).

Residues 236–254 are compositionally biased toward basic and acidic residues; that stretch reads GDGKGGSDEPGARVDRPEG. The interval 236 to 263 is disordered; the sequence is GDGKGGSDEPGARVDRPEGYEPPVQETV.

Belongs to the eukaryotic ribosomal protein eS1 family. As to quaternary structure, component of the small ribosomal subunit. Mature ribosomes consist of a small (40S) and a large (60S) subunit. The 40S subunit contains about 33 different proteins and 1 molecule of RNA (18S). The 60S subunit contains about 49 different proteins and 3 molecules of RNA (28S, 5.8S and 5S).

The protein localises to the cytoplasm. The protein is Small ribosomal subunit protein eS1 of Periplaneta americana (American cockroach).